Consider the following 132-residue polypeptide: Ribosome-binding factor A (132 aa).

The protein belongs to the RbfA family. As to quaternary structure, monomer. Binds 30S ribosomal subunits, but not 50S ribosomal subunits or 70S ribosomes.

It is found in the cytoplasm. Functionally, one of several proteins that assist in the late maturation steps of the functional core of the 30S ribosomal subunit. Associates with free 30S ribosomal subunits (but not with 30S subunits that are part of 70S ribosomes or polysomes). Required for efficient processing of 16S rRNA. May interact with the 5'-terminal helix region of 16S rRNA. The sequence is that of Ribosome-binding factor A from Burkholderia multivorans (strain ATCC 17616 / 249).